Reading from the N-terminus, the 282-residue chain is Aspergillopepsin-2 (282 aa).

A signal peptide spans 1–18; the sequence is MKFSTILTGSLFATAALA. 2 propeptides span residues 19–59 and 99–109; these read APLT…GTTN and GGGYGYWKNKR. A compositionally biased stretch (basic residues) spans 27-39; sequence ARKEARAAGKRHS. The segment at 27–46 is disordered; sequence ARKEARAAGKRHSNPPYIPG. Gln110 is subject to Pyrrolidone carboxylic acid. 2 cysteine pairs are disulfide-bonded: Cys115–Cys139 and Cys127–Cys210.

It belongs to the peptidase G1 family. In terms of assembly, heterodimer of two noncovalently bound light and heavy chains.

It carries out the reaction Preferential cleavage in B chain of insulin: 3-Asn-|-Gln-4, 13-Gly-|-Ala-14, and 26-Tyr-|-Thr-27.. This is Aspergillopepsin-2 from Aspergillus niger.